The sequence spans 376 residues: Chanoclavine-I aldehyde reductase easA (376 aa).

FMN is bound by residues 29–31, Ala-64, Gln-106, and His-173; that span reads PTT. Residues His-173 and Asn-176 each contribute to the substrate site. The active-site Proton donor is the Tyr-178. FMN is bound by residues Lys-225, Gly-297, 323 to 324, and Arg-324; that span reads GR. Substrate is bound at residue Tyr-351.

Belongs to the NADH:flavin oxidoreductase/NADH oxidase family. FMN is required as a cofactor.

The catalysed reaction is dihydrochanoclavine-I aldehyde + NADP(+) = chanoclavine-I aldehyde + NADPH + H(+). It participates in alkaloid biosynthesis; ergot alkaloid biosynthesis. Aldehyde reductase; part of the gene cluster that mediates the biosynthesis of fumiclavanine C, a fungal ergot alkaloid. DmaW catalyzes the first step of ergot alkaloid biosynthesis by condensing dimethylallyl diphosphate (DMAP) and tryptophan to form 4-dimethylallyl-L-tryptophan. The second step is catalyzed by the methyltransferase easF that methylates 4-dimethylallyl-L-tryptophan in the presence of S-adenosyl-L-methionine, resulting in the formation of 4-dimethylallyl-L-abrine. The catalase easC and the FAD-dependent oxidoreductase easE then transform 4-dimethylallyl-L-abrine to chanoclavine-I which is further oxidized by EasD in the presence of NAD(+), resulting in the formation of chanoclavine-I aldehyde. EasA reduces chanoclavine-I aldehyde to dihydrochanoclavine-I aldehyde that spontaneously dehydrates to form 6,8-dimethyl-6,7-didehydroergoline. EasG then catalyzes the reduction of 6,8-dimethyl-6,7-didehydroergoline to form festuclavine. Hydrolysis of festuclavine by easM then leads to the formation of fumigaclavine B which is in turn acetylated by easN to fumigaclavine A. Finally, easL catalyzes the conversion of fumigaclavine A into fumigaclavine C by attaching a dimethylallyl moiety to C-2 of the indole nucleus. The polypeptide is Chanoclavine-I aldehyde reductase easA (Aspergillus fumigatus (strain ATCC MYA-4609 / CBS 101355 / FGSC A1100 / Af293) (Neosartorya fumigata)).